Reading from the N-terminus, the 297-residue chain is Glucuronoxylan 4-O-methyltransferase 3 (297 aa).

Residues 9-29 (LNLKVIFIGSSILILIIIYLA) form a helical membrane-spanning segment. Low complexity predominate over residues 35-47 (SSSSKPISKTNLS). The tract at residues 35-63 (SSSSKPISKTNLSQEEEETQHKQEGCPTT) is disordered.

It belongs to the methyltransferase superfamily. As to expression, expressed in hypocotyls, roots, rosette leaves, stems and siliques.

The protein resides in the golgi apparatus membrane. The enzyme catalyses glucuronoxylan D-glucuronate + n S-adenosyl-L-methionine = glucuronoxylan 4-O-methyl-D-glucuronate + n S-adenosyl-L-homocysteine + n H(+). Its function is as follows. Methyltransferase catalyzing 4-O-methylation of glucuronic acid side chains on xylan. This is Glucuronoxylan 4-O-methyltransferase 3 (GXM3) from Arabidopsis thaliana (Mouse-ear cress).